Consider the following 85-residue polypeptide: uncharacterized protein (85 aa).

This is an uncharacterized protein from Gallid herpesvirus 2 (strain Chicken/Md5/ATCC VR-987) (GaHV-2).